The primary structure comprises 892 residues: Exo-beta-D-glucosaminidase (892 aa).

A signal peptide spans 1–18 (MLANAIAALLLGSGIASA). Residues 19–28 (AGHGSPLTSK) constitute a propeptide that is removed on maturation. 3 N-linked (GlcNAc...) asparagine glycosylation sites follow: Asn196, Asn336, and Asn440. The active-site Proton donor is Asp464. Glu539 serves as the catalytic Nucleophile. Asn557, Asn578, Asn689, and Asn825 each carry an N-linked (GlcNAc...) asparagine glycan.

It belongs to the glycosyl hydrolase 2 family. In terms of assembly, monomer.

The protein localises to the secreted. Its subcellular location is the extracellular space. It carries out the reaction Hydrolysis of chitosan or chitosan oligosaccharides to remove successive D-glucosamine residues from the non-reducing termini.. In terms of biological role, hydrolyzes chitosan and chitooligosaccharides with retention of anomeric configuration. Has no activity against beta-D-galactoside, beta-D-glucuronide, beta-D-mannoside, chitin, glycol chitosan, cellulose, N,N'-diacetylchitibiose and pNP-GlcNAc. This Hypocrea jecorina (Trichoderma reesei) protein is Exo-beta-D-glucosaminidase.